Consider the following 117-residue polypeptide: Large ribosomal subunit protein bL19 (117 aa).

This sequence belongs to the bacterial ribosomal protein bL19 family.

Functionally, this protein is located at the 30S-50S ribosomal subunit interface and may play a role in the structure and function of the aminoacyl-tRNA binding site. The protein is Large ribosomal subunit protein bL19 of Desulfotalea psychrophila (strain LSv54 / DSM 12343).